A 1384-amino-acid chain; its full sequence is Contactin-associated protein 1 (1384 aa).

Positions 1 to 19 are cleaved as a signal peptide; sequence MMHLRLFCILLAAVSGAEG. The Extracellular portion of the chain corresponds to 20–1283; that stretch reads WGYYGCDEEL…PYYHDEGWVA (1264 aa). In terms of domain architecture, F5/8 type C spans 25–168; sequence CDEELVGPLY…IGLRLGLYGC (144 aa). A disulfide bond links Cys-25 and Cys-168. 3 N-linked (GlcNAc...) asparagine glycosylation sites follow: Asn-120, Asn-128, and Asn-276. 2 Laminin G-like domains span residues 203-355 and 389-538; these read FKTE…AFRC and FRTW…FDTC. Residues Cys-323 and Cys-355 are joined by a disulfide bond. 3 N-linked (GlcNAc...) asparagine glycosylation sites follow: Asn-420, Asn-499, and Asn-518. Intrachain disulfides connect Cys-506-Cys-538, Cys-544-Cys-555, Cys-549-Cys-564, and Cys-566-Cys-576. The 38-residue stretch at 540–577 folds into the EGF-like 1 domain; the sequence is ITDRCSPNMCEHDGRCYQSWDDFICYCELTGYKGETCH. A Fibrinogen C-terminal domain is found at 576 to 795; it reads CHTPLYKESC…NTISFHTGAA (220 aa). N-linked (GlcNAc...) asparagine glycosylation is found at Asn-597, Asn-653, Asn-664, Asn-763, Asn-804, Asn-843, Asn-860, Asn-948, and Asn-956. Residues 813-956 enclose the Laminin G-like 3 domain; it reads FRTSAPSGVF…ANASEGTSPN (144 aa). 4 disulfides stabilise this stretch: Cys-930–Cys-957, Cys-961–Cys-974, Cys-968–Cys-983, and Cys-985–Cys-995. The EGF-like 2 domain occupies 957-996; the sequence is CTGHCAHPRLPCFHGGRCVERYSYYTCDCDLTAFDGPYCN. 2 N-linked (GlcNAc...) asparagine glycosylation sites follow: Asn-1078 and Asn-1147. The Laminin G-like 4 domain maps to 1088 to 1250; sequence FSTSSAPAVL…VQGELSESNC (163 aa). A disulfide bridge connects residues Cys-1209 and Cys-1250. A helical membrane pass occupies residues 1284–1304; it reads ILLGFLVAFLLLGLVGMLVLF. The Cytoplasmic portion of the chain corresponds to 1305–1384; it reads YLQNHRYKGS…PQILEESRSE (80 aa). A compositionally biased stretch (basic and acidic residues) spans 1319-1328; it reads EPKAAHEYHP. Residues 1319–1384 are disordered; the sequence is EPKAAHEYHP…PQILEESRSE (66 aa). The SH3-binding motif lies at 1328–1369; that stretch reads PGSKPPLPTSGPAQVPTPTAAPNQAPASAPAPAPTPAPAPGP. Low complexity predominate over residues 1339–1355; the sequence is PAQVPTPTAAPNQAPAS. The span at 1356 to 1368 shows a compositional bias: pro residues; it reads APAPAPTPAPAPG. Ser-1383 carries the post-translational modification Phosphoserine.

Belongs to the neurexin family. In terms of assembly, interacts with CNTN1/contactin in cis form. As to expression, predominantly expressed in brain. Weak expression detected in ovary, pancreas, colon, lung, heart, intestine and testis.

It localises to the membrane. It is found in the cell junction. The protein localises to the paranodal septate junction. Required, with CNTNAP2, for radial and longitudinal organization of myelinated axons. Plays a role in the formation of functional distinct domains critical for saltatory conduction of nerve impulses in myelinated nerve fibers. Demarcates the paranodal region of the axo-glial junction. In association with contactin involved in the signaling between axons and myelinating glial cells. The sequence is that of Contactin-associated protein 1 (CNTNAP1) from Homo sapiens (Human).